We begin with the raw amino-acid sequence, 258 residues long: Tryptophan synthase alpha chain (258 aa).

Residues Glu52 and Asp63 each act as proton acceptor in the active site.

It belongs to the TrpA family. In terms of assembly, tetramer of two alpha and two beta chains.

It catalyses the reaction (1S,2R)-1-C-(indol-3-yl)glycerol 3-phosphate + L-serine = D-glyceraldehyde 3-phosphate + L-tryptophan + H2O. Its pathway is amino-acid biosynthesis; L-tryptophan biosynthesis; L-tryptophan from chorismate: step 5/5. The alpha subunit is responsible for the aldol cleavage of indoleglycerol phosphate to indole and glyceraldehyde 3-phosphate. The sequence is that of Tryptophan synthase alpha chain from Streptococcus pneumoniae (strain Taiwan19F-14).